The sequence spans 588 residues: Arylsulfatase L (588 aa).

The N-terminal stretch at 1-31 (MLHLHHSWLCFRSWLAGMLSVLLGLVPSASS) is a signal peptide. N-linked (GlcNAc...) asparagine glycosylation occurs at asparagine 32. Residues aspartate 46 and aspartate 47 each contribute to the Ca(2+) site. N-linked (GlcNAc...) asparagine glycosylation occurs at asparagine 58. Cysteine 86 provides a ligand contact to Ca(2+). The active-site Nucleophile is the cysteine 86. Cysteine 86 carries the 3-oxoalanine (Cys) modification. The N-linked (GlcNAc...) asparagine glycan is linked to asparagine 125. Lysine 145 serves as a coordination point for substrate. Residue histidine 147 is part of the active site. Asparagine 258 carries an N-linked (GlcNAc...) asparagine glycan. Histidine 301 serves as a coordination point for substrate. Asparagine 344 carries N-linked (GlcNAc...) asparagine glycosylation. Ca(2+) contacts are provided by aspartate 353 and histidine 354. Lysine 378 is a substrate binding site.

Belongs to the sulfatase family. It depends on Ca(2+) as a cofactor. In terms of processing, the conversion to 3-oxoalanine (also known as C-formylglycine, FGly), of a serine or cysteine residue in prokaryotes and of a cysteine residue in eukaryotes, is critical for catalytic activity.

The protein resides in the golgi apparatus. It localises to the golgi stack. The enzyme catalyses an aryl sulfate + H2O = a phenol + sulfate + H(+). In terms of biological role, exhibits arylsulfatase activity towards the artificial substrate 4-methylumbelliferyl sulfate. May be essential for the correct composition of cartilage and bone matrix during development. Has no activity toward steroid sulfates. In Macaca fascicularis (Crab-eating macaque), this protein is Arylsulfatase L (ARSL).